The following is a 453-amino-acid chain: Glutamyl-tRNA(Gln) amidotransferase subunit A (453 aa).

Residues Lys56 and Ser131 each act as charge relay system in the active site. Ser155 (acyl-ester intermediate) is an active-site residue.

This sequence belongs to the amidase family. GatA subfamily. Heterotrimer of A, B and C subunits.

The enzyme catalyses L-glutamyl-tRNA(Gln) + L-glutamine + ATP + H2O = L-glutaminyl-tRNA(Gln) + L-glutamate + ADP + phosphate + H(+). Functionally, allows the formation of correctly charged Gln-tRNA(Gln) through the transamidation of misacylated Glu-tRNA(Gln) in organisms which lack glutaminyl-tRNA synthetase. The reaction takes place in the presence of glutamine and ATP through an activated gamma-phospho-Glu-tRNA(Gln). This is Glutamyl-tRNA(Gln) amidotransferase subunit A from Campylobacter jejuni (strain RM1221).